Reading from the N-terminus, the 328-residue chain is Malate dehydrogenase (328 aa).

11–17 (GAAGQIG) lines the NAD(+) pocket. 2 residues coordinate substrate: Arg94 and Arg100. Residues Asn107, Gln114, and 131 to 133 (VGN) each bind NAD(+). Substrate is bound by residues Asn133 and Arg164. The Proton acceptor role is filled by His189.

Belongs to the LDH/MDH superfamily. MDH type 2 family.

It catalyses the reaction (S)-malate + NAD(+) = oxaloacetate + NADH + H(+). Its function is as follows. Catalyzes the reversible oxidation of malate to oxaloacetate. This is Malate dehydrogenase from Stenotrophomonas maltophilia (strain R551-3).